Here is a 347-residue protein sequence, read N- to C-terminus: 3,4-dihydroxy-2-butanone 4-phosphate synthase (347 aa).

A DHBP synthase region spans residues 1 to 200 (MPLNRVREAI…ISDLIEYRMQ (200 aa)). D-ribulose 5-phosphate is bound by residues 27 to 28 (RE), aspartate 32, 139 to 143 (RTGHT), and glutamate 163. Position 28 (glutamate 28) interacts with Mg(2+). Mg(2+) is bound at residue histidine 142. Positions 201–347 (NEMLILIKER…IVLQGGPIQL (147 aa)) are GTP cyclohydrolase II-like.

The protein in the N-terminal section; belongs to the DHBP synthase family. It in the C-terminal section; belongs to the GTP cyclohydrolase II family. It depends on Mg(2+) as a cofactor. Mn(2+) is required as a cofactor.

The catalysed reaction is D-ribulose 5-phosphate = (2S)-2-hydroxy-3-oxobutyl phosphate + formate + H(+). It functions in the pathway cofactor biosynthesis; riboflavin biosynthesis; 2-hydroxy-3-oxobutyl phosphate from D-ribulose 5-phosphate: step 1/1. Its function is as follows. Catalyzes the conversion of D-ribulose 5-phosphate to formate and 3,4-dihydroxy-2-butanone 4-phosphate. This is 3,4-dihydroxy-2-butanone 4-phosphate synthase (ribB) from Wolinella succinogenes (strain ATCC 29543 / DSM 1740 / CCUG 13145 / JCM 31913 / LMG 7466 / NCTC 11488 / FDC 602W) (Vibrio succinogenes).